The chain runs to 503 residues: Glucosaminyl-phosphatidylinositol-acyltransferase PIGW (503 aa).

Residues Met-1–Glu-21 lie on the Lumenal side of the membrane. An N-linked (GlcNAc...) asparagine glycan is attached at Asn-15. Residues Ile-22 to Leu-42 form a helical membrane-spanning segment. Over Ser-43–Arg-56 the chain is Cytoplasmic. Residues Phe-57–Phe-75 form a helical membrane-spanning segment. Residues Ser-76 to Phe-78 lie on the Lumenal side of the membrane. A helical membrane pass occupies residues Val-79 to Tyr-98. Over Cys-99–Cys-131 the chain is Cytoplasmic. Residues Phe-132 to Phe-152 form a helical membrane-spanning segment. Residues Pro-153 to Glu-160 lie on the Lumenal side of the membrane. The helical transmembrane segment at Leu-161–Val-181 threads the bilayer. Residues Ser-182 to Ser-201 lie on the Cytoplasmic side of the membrane. A helical membrane pass occupies residues Leu-202–Val-222. Residues Asp-223–Asn-236 are Lumenal-facing. Residues Phe-237 to Leu-257 form a helical membrane-spanning segment. Over Asn-258–Arg-259 the chain is Cytoplasmic. The chain crosses the membrane as a helical span at residues Ser-260–Leu-280. Topologically, residues Lys-281–Gly-304 are lumenal. Residues Ile-305–Val-325 form a helical membrane-spanning segment. Over Leu-326 to Lys-337 the chain is Cytoplasmic. The helical transmembrane segment at Val-338–Val-358 threads the bilayer. Residues Asn-359–Asn-369 are Lumenal-facing. Residues Leu-370–Gly-390 traverse the membrane as a helical segment. Residues Asp-391–Gln-447 are Cytoplasmic-facing. Residue Ser-415 is modified to Phosphoserine. A helical membrane pass occupies residues Leu-448–Leu-468. Residues His-469 to Thr-472 are Lumenal-facing. A helical transmembrane segment spans residues Pro-473 to Leu-493. The Cytoplasmic segment spans residues His-494–Trp-503.

This sequence belongs to the PIGW family.

It localises to the endoplasmic reticulum membrane. It participates in glycolipid biosynthesis; glycosylphosphatidylinositol-anchor biosynthesis. In terms of biological role, acyltransferase that catalyzes the acyl transfer from an acyl-CoA at the 2-OH position of the inositol ring of glucosaminyl phosphatidylinositol (GlcN-PI) to generate glucosaminyl acyl phosphatidylinositol (GlcN-(acyl)PI) and participates in the fourth step of GPI-anchor biosynthesis. Required for the transport of GPI-anchored proteins to the plasma membrane. Acetylation during GPI-anchor biosynthesis is not essential for the subsequent mannosylation and is usually removed soon after the attachment of GPIs to proteins. In Bos taurus (Bovine), this protein is Glucosaminyl-phosphatidylinositol-acyltransferase PIGW.